A 368-amino-acid chain; its full sequence is Protein-glutamate methylesterase/protein-glutamine glutaminase (368 aa).

Residues 9–126 (RVLVVDDSAF…SINMRELKDE (118 aa)) enclose the Response regulatory domain. At D60 the chain carries 4-aspartylphosphate. The region spanning 161 to 354 (SVPARIAVAI…ETVVRAVEMI (194 aa)) is the CheB-type methylesterase domain. Active-site residues include S173, H200, and D296.

The protein belongs to the CheB family. Phosphorylated by CheA. Phosphorylation of the N-terminal regulatory domain activates the methylesterase activity.

The protein resides in the cytoplasm. It catalyses the reaction [protein]-L-glutamate 5-O-methyl ester + H2O = L-glutamyl-[protein] + methanol + H(+). It carries out the reaction L-glutaminyl-[protein] + H2O = L-glutamyl-[protein] + NH4(+). Functionally, involved in chemotaxis. Part of a chemotaxis signal transduction system that modulates chemotaxis in response to various stimuli. Catalyzes the demethylation of specific methylglutamate residues introduced into the chemoreceptors (methyl-accepting chemotaxis proteins or MCP) by CheR. Also mediates the irreversible deamidation of specific glutamine residues to glutamic acid. This Pyrococcus abyssi (strain GE5 / Orsay) protein is Protein-glutamate methylesterase/protein-glutamine glutaminase.